The following is a 330-amino-acid chain: MSSPANLFPGLNDITDVLEEFPLATSRYLTLLHEIDAKCVHSMPNLNERIDKFLKKDFNKDHQTQVRLLNNINKIYEELMPSLEEKMHVSSIMLDNLDRLTSRLELAYEVAIKNTEIPRGLRLGVDNHPAMHLHHELMEKIESKSNSKSSQALKSESRREAMAANRRQGEHYSASTHQQDDSKNDANYGGSRHESQDHTGNNTNSRKRANAANTNNADPETKKRKRRVATTAVSPSTISTATAVNNGRIGTSTASRGVSSVGNSNNSRISRPKTNDYGEPLYCYCNQVAYGEMVGCDGADCELEWFHLPCIGLETLPKGKWYCDDCKKKL.

A disordered region spans residues 139–272; that stretch reads EKIESKSNSK…NSNNSRISRP (134 aa). The segment covering 231–254 has biased composition (polar residues); it reads TAVSPSTISTATAVNNGRIGTSTA. Residues 255–269 are compositionally biased toward low complexity; that stretch reads SRGVSSVGNSNNSRI. The segment at 280-329 adopts a PHD-type zinc-finger fold; the sequence is PLYCYCNQVAYGEMVGCDGADCELEWFHLPCIGLETLPKGKWYCDDCKKK. Zn(2+) contacts are provided by C283, C285, C296, C301, H307, C310, C323, and C326.

This sequence belongs to the ING family. As to quaternary structure, interacts with H3K4me3 and to a lesser extent with H3K4me2. Component of the RPD3C(L) complex composed of at least ASH1, CTI6, DEP1, PHO23, RPD3, RXT2, RXT3, SAP30, SDS3, SIN3, UME1 and UME6.

It is found in the nucleus. Its function is as follows. Component of the RPD3C(L) histone deacetylase complex (HDAC) responsible for the deacetylation of lysine residues on the N-terminal part of the core histones (H2A, H2B, H3 and H4). Histone deacetylation gives a tag for epigenetic repression and plays an important role in transcriptional regulation, cell cycle progression and developmental events. This Saccharomyces cerevisiae (strain ATCC 204508 / S288c) (Baker's yeast) protein is Transcriptional regulatory protein PHO23 (PHO23).